Reading from the N-terminus, the 425-residue chain is Glutamyl-tRNA reductase (425 aa).

Residues 49–52, Ser107, 112–114, and Gln118 each bind substrate; these read TCNR and EPQ. Catalysis depends on Cys50, which acts as the Nucleophile. 187–192 is an NADP(+) binding site; it reads GAGETI.

Belongs to the glutamyl-tRNA reductase family. As to quaternary structure, homodimer.

The enzyme catalyses (S)-4-amino-5-oxopentanoate + tRNA(Glu) + NADP(+) = L-glutamyl-tRNA(Glu) + NADPH + H(+). It functions in the pathway porphyrin-containing compound metabolism; protoporphyrin-IX biosynthesis; 5-aminolevulinate from L-glutamyl-tRNA(Glu): step 1/2. In terms of biological role, catalyzes the NADPH-dependent reduction of glutamyl-tRNA(Glu) to glutamate 1-semialdehyde (GSA). The polypeptide is Glutamyl-tRNA reductase (Pseudomonas syringae pv. syringae (strain B728a)).